The primary structure comprises 589 residues: Phenylalanine--tRNA ligase beta subunit (589 aa).

The B5 domain maps to 302–377 (LEVREERISV…IAYGYNNIKK (76 aa)). Residues Asp-355, Asp-361, Glu-364, and Asp-365 each coordinate Mg(2+).

Belongs to the phenylalanyl-tRNA synthetase beta subunit family. Type 2 subfamily. In terms of assembly, tetramer of two alpha and two beta subunits. Mg(2+) is required as a cofactor.

The protein resides in the cytoplasm. It carries out the reaction tRNA(Phe) + L-phenylalanine + ATP = L-phenylalanyl-tRNA(Phe) + AMP + diphosphate + H(+). This Drosophila melanogaster (Fruit fly) protein is Phenylalanine--tRNA ligase beta subunit.